A 122-amino-acid polypeptide reads, in one-letter code: Large ribosomal subunit protein uL18 (122 aa).

Belongs to the universal ribosomal protein uL18 family. As to quaternary structure, part of the 50S ribosomal subunit; part of the 5S rRNA/L5/L18/L25 subcomplex. Contacts the 5S and 23S rRNAs.

Its function is as follows. This is one of the proteins that bind and probably mediate the attachment of the 5S RNA into the large ribosomal subunit, where it forms part of the central protuberance. This chain is Large ribosomal subunit protein uL18, found in Leptospira borgpetersenii serovar Hardjo-bovis (strain JB197).